Consider the following 839-residue polypeptide: Putative AC9 transposase (839 aa).

The span at 32-43 shows a compositional bias: polar residues; sequence SSSNANGTATDP. The disordered stretch occupies residues 32-85; it reads SSSNANGTATDPSQDDMAIVHEPQPQPQPQPEPQPQPQPEPEEEAPQKRAKKCT. The span at 55-70 shows a compositional bias: pro residues; that stretch reads QPQPQPQPEPQPQPQP.

The polypeptide is Putative AC9 transposase (Zea mays (Maize)).